We begin with the raw amino-acid sequence, 319 residues long: Protein SICKLE (319 aa).

Disordered stretches follow at residues methionine 1–phenylalanine 59, serine 71–glutamate 239, and cysteine 262–glutamine 299. Composition is skewed to polar residues over residues threonine 27–threonine 56 and proline 78–histidine 88. The span at proline 93–proline 103 shows a compositional bias: pro residues. The span at serine 185 to asparagine 210 shows a compositional bias: polar residues. Residues aspartate 228–alanine 238 show a composition bias toward basic and acidic residues. The segment covering serine 285–glutamine 299 has biased composition (polar residues).

Interacts with ubiquitin thioesterases UBP12 and UBP13, and with protein phosphatase 2A subunits PP2AB1, PP2AB2, PP2A3, PP2A4, PP2AA1 and PP2AA2. In terms of tissue distribution, expressed in the shoot apical meristem (SAM), embryos, seedlings, root tips, and root and leaf primordia.

The protein localises to the nucleus. Its subcellular location is the cytoplasm. It is found in the cytosol. Its function is as follows. Involved in miRNAs and siRNAs biogenesis and thus promotes gene silencing. Modulates auxin (IAA) transport-related developmental programs by regulating protein phosphatase 2A (PP2As)-driven auxin efflux carrier PIN proteins recycling and polarity. Required during development. Necessary for abiotic stress (e.g. chilling and salt) tolerance. The polypeptide is Protein SICKLE (Arabidopsis thaliana (Mouse-ear cress)).